An 804-amino-acid chain; its full sequence is Leucine--tRNA ligase (804 aa).

Residues 40-51 carry the 'HIGH' region motif; that stretch reads PYPSGAGLHVGH. The 'KMSKS' region signature appears at 576-580; that stretch reads KMSKS. An ATP-binding site is contributed by Lys579.

Belongs to the class-I aminoacyl-tRNA synthetase family.

Its subcellular location is the cytoplasm. It carries out the reaction tRNA(Leu) + L-leucine + ATP = L-leucyl-tRNA(Leu) + AMP + diphosphate. The chain is Leucine--tRNA ligase from Staphylococcus saprophyticus subsp. saprophyticus (strain ATCC 15305 / DSM 20229 / NCIMB 8711 / NCTC 7292 / S-41).